We begin with the raw amino-acid sequence, 377 residues long: Guanine nucleotide-binding protein subunit alpha-13 (377 aa).

S-palmitoyl cysteine attachment occurs at residues Cys14 and Cys18. The region spanning 47 to 377 (RLVKILLLGA…HDNLKQLMLQ (331 aa)) is the G-alpha domain. The tract at residues 50–63 (KILLLGAGESGKST) is G1 motif. GTP-binding positions include 58–63 (ESGKST), Ser173, and 197–200 (LLAR). Residue Ser62 coordinates Mg(2+). The tract at residues 195-203 (DILLARRPT) is G2 motif. Thr203 is a Mg(2+) binding site. At Thr203 the chain carries Phosphothreonine. The tract at residues 218-227 (FKMVDVGGQR) is G3 motif. The G4 motif stretch occupies residues 287-294 (ILFLNKTD). GTP-binding positions include 291-294 (NKTD) and Ala349. A G5 motif region spans residues 347–352 (TTAINT).

Belongs to the G-alpha family. G(12) subfamily. G proteins are composed of 3 units; alpha, beta and gamma. The alpha chain contains the guanine nucleotide binding site. Interacts with UBXD5. Interacts with HAX1. Interacts (in GTP-bound form) with PPP5C (via TPR repeats); activates PPP5C phosphatase activity and translocates PPP5C to the cell membrane. Interacts with RGS22. Interacts (in GTP-bound form) with ARHGEF1. Interacts (in GTP-bound form) with ARHGEF11 (via RGS domain). Interacts (in GTP-bound form) with ARHGEF12 (via RGS domain). Interacts with CTNND1. Interacts with GAS2L2. Interacts with GPR35. Interacts with GPR174. Phosphorylation on Thr-203 destabilizes the heterotrimer of alpha, beta and gamma, and inhibits Rho activation. Expressed in brain and testis, as well as in kidney and sperm (at protein level).

It is found in the membrane. The protein localises to the melanosome. The protein resides in the cytoplasm. It localises to the nucleus. Guanine nucleotide-binding proteins (G proteins) are involved as modulators or transducers in various transmembrane signaling systems. Activates effector molecule RhoA by binding and activating RhoGEFs (ARHGEF1/p115RhoGEF, ARHGEF11/PDZ-RhoGEF and ARHGEF12/LARG). GNA13-dependent Rho signaling subsequently regulates transcription factor AP-1 (activating protein-1). Promotes tumor cell invasion and metastasis by activating Rho/ROCK signaling pathway. Inhibits CDH1-mediated cell adhesion in a process independent from Rho activation. In lymphoid follicles, transmits P2RY8- and S1PR2-dependent signals that lead to inhibition of germinal center (GC) B cell growth and migration outside the GC niche. This is Guanine nucleotide-binding protein subunit alpha-13 (Gna13) from Mus musculus (Mouse).